The sequence spans 122 residues: Large ribosomal subunit protein uL14 (122 aa).

It belongs to the universal ribosomal protein uL14 family. In terms of assembly, part of the 50S ribosomal subunit. Forms a cluster with proteins L3 and L19. In the 70S ribosome, L14 and L19 interact and together make contacts with the 16S rRNA in bridges B5 and B8.

Functionally, binds to 23S rRNA. Forms part of two intersubunit bridges in the 70S ribosome. This is Large ribosomal subunit protein uL14 from Macrococcus caseolyticus (strain JCSC5402) (Macrococcoides caseolyticum).